A 185-amino-acid chain; its full sequence is Ribosome-recycling factor (185 aa).

The protein belongs to the RRF family.

Its subcellular location is the cytoplasm. Responsible for the release of ribosomes from messenger RNA at the termination of protein biosynthesis. May increase the efficiency of translation by recycling ribosomes from one round of translation to another. This is Ribosome-recycling factor from Pseudomonas fluorescens (strain SBW25).